Reading from the N-terminus, the 98-residue chain is NADH-ubiquinone oxidoreductase chain 4L (98 aa).

Helical transmembrane passes span 2-22, 29-49, and 61-81; these read PSISTNITLAFTIALTGMLVF, SLLCLEGMMLAMFILSILFIM, and ILLLVLAACEAAIGLALLVMV.

It belongs to the complex I subunit 4L family. In terms of assembly, core subunit of respiratory chain NADH dehydrogenase (Complex I) which is composed of 45 different subunits.

It is found in the mitochondrion inner membrane. It carries out the reaction a ubiquinone + NADH + 5 H(+)(in) = a ubiquinol + NAD(+) + 4 H(+)(out). Core subunit of the mitochondrial membrane respiratory chain NADH dehydrogenase (Complex I) which catalyzes electron transfer from NADH through the respiratory chain, using ubiquinone as an electron acceptor. Part of the enzyme membrane arm which is embedded in the lipid bilayer and involved in proton translocation. This Lepilemur sahamalazensis (Sahamalaza sportive lemur) protein is NADH-ubiquinone oxidoreductase chain 4L (MT-ND4L).